We begin with the raw amino-acid sequence, 494 residues long: Glutamyl-tRNA(Gln) amidotransferase subunit A (494 aa).

Active-site charge relay system residues include Lys-79 and Ser-159. The active-site Acyl-ester intermediate is Ser-183.

It belongs to the amidase family. GatA subfamily. In terms of assembly, heterotrimer of A, B and C subunits.

The enzyme catalyses L-glutamyl-tRNA(Gln) + L-glutamine + ATP + H2O = L-glutaminyl-tRNA(Gln) + L-glutamate + ADP + phosphate + H(+). Allows the formation of correctly charged Gln-tRNA(Gln) through the transamidation of misacylated Glu-tRNA(Gln) in organisms which lack glutaminyl-tRNA synthetase. The reaction takes place in the presence of glutamine and ATP through an activated gamma-phospho-Glu-tRNA(Gln). The protein is Glutamyl-tRNA(Gln) amidotransferase subunit A of Bartonella henselae (strain ATCC 49882 / DSM 28221 / CCUG 30454 / Houston 1) (Rochalimaea henselae).